The chain runs to 520 residues: Cytochrome P450 monooxygenase oblB (520 aa).

The next 3 membrane-spanning stretches (helical) occupy residues 17–37 (VAVI…RLFL), 229–249 (LFMG…SILA), and 320–340 (IGTG…HIVV). Cys-462 contacts heme.

Belongs to the cytochrome P450 family. It depends on heme as a cofactor.

It is found in the membrane. It participates in secondary metabolite biosynthesis; terpenoid biosynthesis. Cytochrome P450 monooxygenase; part of the gene cluster that mediates the biosynthesis of the sesterterpenes ophiobolins, fungal phytotoxins with potential anti-cancer activities. The first step of the pathway is performed by the sesterterpene synthase oblA that possesses both prenyl transferase and terpene cyclase activity, converting isopentenyl diphosphate and dimethylallyl diphosphate into geranylfarnesyl diphosphate (GFPP) and further converting GFPP into ophiobolin F, respectively. Other sesterterpenoids (C(25) terpenoids) are found as minor products of oblA. It is expected that ophiobolin F is then oxidized to ophiobolin A via ophiobolin C and ophiobolin B intermediates by the combined action of the cytochrome P450 monooxygenase oblB and the FAD-dependent oxidoreductase oblC. Although oblB catalyzes multistep oxygenations at C5 and C21/C7 in a relatively efficient manner, it is unable to convert ophiobolin F to ophiobolin C and produces instead several unexpected derivatives. In Aspergillus clavatus (strain ATCC 1007 / CBS 513.65 / DSM 816 / NCTC 3887 / NRRL 1 / QM 1276 / 107), this protein is Cytochrome P450 monooxygenase oblB.